The sequence spans 238 residues: 1-(5-phosphoribosyl)-5-[(5-phosphoribosylamino)methylideneamino] imidazole-4-carboxamide isomerase (238 aa).

Asp8 (proton acceptor) is an active-site residue. Asp129 functions as the Proton donor in the catalytic mechanism.

Belongs to the HisA/HisF family.

It is found in the cytoplasm. The catalysed reaction is 1-(5-phospho-beta-D-ribosyl)-5-[(5-phospho-beta-D-ribosylamino)methylideneamino]imidazole-4-carboxamide = 5-[(5-phospho-1-deoxy-D-ribulos-1-ylimino)methylamino]-1-(5-phospho-beta-D-ribosyl)imidazole-4-carboxamide. The protein operates within amino-acid biosynthesis; L-histidine biosynthesis; L-histidine from 5-phospho-alpha-D-ribose 1-diphosphate: step 4/9. The protein is 1-(5-phosphoribosyl)-5-[(5-phosphoribosylamino)methylideneamino] imidazole-4-carboxamide isomerase of Lacticaseibacillus paracasei (strain ATCC 334 / BCRC 17002 / CCUG 31169 / CIP 107868 / KCTC 3260 / NRRL B-441) (Lactobacillus paracasei).